The sequence spans 335 residues: Delta(7)-sterol 5(6)-desaturase erg3B (335 aa).

3 helical membrane passes run 74 to 94, 113 to 133, and 152 to 172; these read IWAFGLLLYLTTASLSFALVF, IGQALRAMPVMAALTAPLFLA, and LYTYLQYPLFIAFTDFAIYWI. The Fatty acid hydroxylase domain occupies 160–284; that stretch reads LFIAFTDFAI…FITFWDRIGG (125 aa). A Histidine box-1 motif is present at residues 173 to 177; the sequence is HRGLH. The Histidine box-2 signature appears at 186-190; the sequence is HKPHH. A helical transmembrane segment spans residues 219–239; that stretch reads PFLFPLQKAAYLGLFVFVTIW. The N-linked (GlcNAc...) asparagine glycan is linked to Asn-256. Positions 261–265 match the Histidine box-3 motif; it reads HTIHH.

Belongs to the sterol desaturase family. Fe cation serves as cofactor.

The protein localises to the endoplasmic reticulum membrane. It participates in steroid metabolism; ergosterol biosynthesis. Its function is as follows. Delta(7)-sterol 5(6)-desaturase; part of the third module of ergosterol biosynthesis pathway that includes the late steps of the pathway. Erg3B catalyzes the introduction of a C-5 double bond in the B ring to produce 5-dehydroepisterol. The third module or late pathway involves the ergosterol synthesis itself through consecutive reactions that mainly occur in the endoplasmic reticulum (ER) membrane. Firstly, the squalene synthase erg9 catalyzes the condensation of 2 farnesyl pyrophosphate moieties to form squalene, which is the precursor of all steroids. Squalene synthase is crucial for balancing the incorporation of farnesyl diphosphate (FPP) into sterol and nonsterol isoprene synthesis. Secondly, squalene is converted into lanosterol by the consecutive action of the squalene epoxidase erg1 and the lanosterol synthase erg7. Then, the delta(24)-sterol C-methyltransferase erg6 methylates lanosterol at C-24 to produce eburicol. Eburicol is the substrate of the sterol 14-alpha demethylase encoded by cyp51A and cyp51B, to yield 4,4,24-trimethyl ergosta-8,14,24(28)-trienol. The C-14 reductase erg24 then reduces the C14=C15 double bond which leads to 4,4-dimethylfecosterol. A sequence of further demethylations at C-4, involving the C-4 demethylation complex containing the C-4 methylsterol oxidases erg25A or erg25B, the sterol-4-alpha-carboxylate 3-dehydrogenase erg26 and the 3-keto-steroid reductase erg27, leads to the production of fecosterol via 4-methylfecosterol. The C-8 sterol isomerase erg2 then catalyzes the reaction which results in unsaturation at C-7 in the B ring of sterols and thus converts fecosterol to episterol. The sterol-C5-desaturase erg3B then catalyzes the introduction of a C-5 double bond in the B ring to produce 5-dehydroepisterol. The 2 other sterol-C5-desaturases, erg3A and erg3C, seem to be less important in ergosterol biosynthesis. The C-22 sterol desaturase erg5 further converts 5-dehydroepisterol into ergosta-5,7,22,24(28)-tetraen-3beta-ol by forming the C-22(23) double bond in the sterol side chain. Finally, ergosta-5,7,22,24(28)-tetraen-3beta-ol is substrate of the C-24(28) sterol reductases erg4A and erg4B to produce ergosterol. Possible alternative sterol biosynthetic pathways might exist from fecosterol to ergosterol, depending on the activities of the erg3 isoforms. The protein is Delta(7)-sterol 5(6)-desaturase erg3B of Aspergillus fumigatus (strain ATCC MYA-4609 / CBS 101355 / FGSC A1100 / Af293) (Neosartorya fumigata).